A 360-amino-acid polypeptide reads, in one-letter code: Replication-associated protein (360 aa).

One can recognise a CRESS-DNA virus Rep endonuclease domain in the interval 11–114; sequence SHRNANTFLT…PLAVFERGTF (104 aa). Positions 18–21 match the RCR-1 motif; the sequence is FLTY. Residues Glu-52, His-60, and His-62 each contribute to the a divalent metal cation site. Positions 60-62 match the RCR-2 motif; it reads HLH. The For DNA cleavage activity role is filled by Tyr-100. The RCR-3 signature appears at 100–103; that stretch reads YILK. Glu-104 is an a divalent metal cation binding site. Positions 175–187 are oligomerization; it reads SANKLFPEIQEEF. Residue 229–236 participates in ATP binding; that stretch reads GPTRTGKS. The tract at residues 252–270 is transactivation; it reads VDWSSYNEDAIYNIVDDIP. A Nuclear localization signal motif is present at residues 292–303; that stretch reads KYGKKKKVQKKS.

The protein belongs to the geminiviridae Rep protein family. Homooligomer. Rep binds to repeated DNA motifs (iterons). Forms the O-complex, which is a Rep-DNA complex involved in the initiation of RCR. Part of the C- and V-complexes which are RepA-Rep-DNA complexes involved in the c-sense and v-sense transcription. It depends on Mg(2+) as a cofactor. The cofactor is Mn(2+).

It is found in the host nucleus. Functionally, essential for the replication of viral ssDNA. The closed circular ssDNA genome is first converted to a superhelical dsDNA. Rep binds a specific region at the genome origin of replication. It introduces an endonucleolytic nick within the conserved sequence 5'-TAATATTAC-3' in the intergenic region of the genome present in all geminiviruses, thereby initiating the rolling circle replication (RCR). Following cleavage, binds covalently to the 5'-phosphate of DNA as a tyrosyl ester. The cleavage gives rise to a free 3'-OH that serves as a primer for the cellular DNA polymerase. The polymerase synthesizes the (+) strand DNA by rolling circle mechanism. After one round of replication, a Rep-catalyzed nucleotidyl transfer reaction releases a circular single-stranded virus genome, thereby terminating the replication. Displays origin-specific DNA cleavage, nucleotidyl transferase, ATPase and helicase activities. Acts as an inhibitor of C-sense gene transcription. In Avena sativa (Oat), this protein is Replication-associated protein.